An 892-amino-acid polypeptide reads, in one-letter code: Alanine--tRNA ligase (892 aa).

The Zn(2+) site is built by His596, His600, Cys700, and His704.

This sequence belongs to the class-II aminoacyl-tRNA synthetase family. Zn(2+) serves as cofactor.

It is found in the cytoplasm. It carries out the reaction tRNA(Ala) + L-alanine + ATP = L-alanyl-tRNA(Ala) + AMP + diphosphate. Catalyzes the attachment of alanine to tRNA(Ala) in a two-step reaction: alanine is first activated by ATP to form Ala-AMP and then transferred to the acceptor end of tRNA(Ala). Also edits incorrectly charged Ser-tRNA(Ala) and Gly-tRNA(Ala) via its editing domain. In Methanococcus vannielii (strain ATCC 35089 / DSM 1224 / JCM 13029 / OCM 148 / SB), this protein is Alanine--tRNA ligase.